The primary structure comprises 126 residues: Fatty acid-binding protein, liver (126 aa).

N-acetylalanine is present on Ala2. Lys77, His99, and Gln101 together coordinate cholate.

Belongs to the calycin superfamily. Fatty-acid binding protein (FABP) family.

It localises to the cytoplasm. Binds free fatty acids and their coenzyme A derivatives, bilirubin, and some other small molecules in the cytoplasm. May be involved in intracellular lipid transport. In Aquarana catesbeiana (American bullfrog), this protein is Fatty acid-binding protein, liver (fabp1).